Reading from the N-terminus, the 383-residue chain is ATP phosphoribosyltransferase regulatory subunit (383 aa).

Belongs to the class-II aminoacyl-tRNA synthetase family. HisZ subfamily. As to quaternary structure, heteromultimer composed of HisG and HisZ subunits.

The protein resides in the cytoplasm. It functions in the pathway amino-acid biosynthesis; L-histidine biosynthesis; L-histidine from 5-phospho-alpha-D-ribose 1-diphosphate: step 1/9. Functionally, required for the first step of histidine biosynthesis. May allow the feedback regulation of ATP phosphoribosyltransferase activity by histidine. This Paraburkholderia phytofirmans (strain DSM 17436 / LMG 22146 / PsJN) (Burkholderia phytofirmans) protein is ATP phosphoribosyltransferase regulatory subunit.